The following is a 339-amino-acid chain: DNA-directed RNA polymerase subunit alpha (339 aa).

The alpha N-terminal domain (alpha-NTD) stretch occupies residues 1-233; the sequence is MVREEVAGST…DLFLPFLHAE (233 aa). Residues 264–339 are alpha C-terminal domain (alpha-CTD); the sequence is KKGIPLNSIF…IDLLKNKLSF (76 aa).

Belongs to the RNA polymerase alpha chain family. In plastids the minimal PEP RNA polymerase catalytic core is composed of four subunits: alpha, beta, beta', and beta''. When a (nuclear-encoded) sigma factor is associated with the core the holoenzyme is formed, which can initiate transcription.

It localises to the plastid. Its subcellular location is the chloroplast. The enzyme catalyses RNA(n) + a ribonucleoside 5'-triphosphate = RNA(n+1) + diphosphate. Its function is as follows. DNA-dependent RNA polymerase catalyzes the transcription of DNA into RNA using the four ribonucleoside triphosphates as substrates. In Aegilops tauschii (Tausch's goatgrass), this protein is DNA-directed RNA polymerase subunit alpha.